A 417-amino-acid polypeptide reads, in one-letter code: Serine hydroxymethyltransferase (417 aa).

Residues Leu-121 and 125 to 127 contribute to the (6S)-5,6,7,8-tetrahydrofolate site; that span reads GHL. At Lys-229 the chain carries N6-(pyridoxal phosphate)lysine. 355-357 is a (6S)-5,6,7,8-tetrahydrofolate binding site; the sequence is SSF.

The protein belongs to the SHMT family. As to quaternary structure, homodimer. The cofactor is pyridoxal 5'-phosphate.

It localises to the cytoplasm. It catalyses the reaction (6R)-5,10-methylene-5,6,7,8-tetrahydrofolate + glycine + H2O = (6S)-5,6,7,8-tetrahydrofolate + L-serine. The protein operates within one-carbon metabolism; tetrahydrofolate interconversion. It participates in amino-acid biosynthesis; glycine biosynthesis; glycine from L-serine: step 1/1. Functionally, catalyzes the reversible interconversion of serine and glycine with tetrahydrofolate (THF) serving as the one-carbon carrier. This reaction serves as the major source of one-carbon groups required for the biosynthesis of purines, thymidylate, methionine, and other important biomolecules. Also exhibits THF-independent aldolase activity toward beta-hydroxyamino acids, producing glycine and aldehydes, via a retro-aldol mechanism. This chain is Serine hydroxymethyltransferase, found in Baumannia cicadellinicola subsp. Homalodisca coagulata.